A 132-amino-acid chain; its full sequence is Small ribosomal subunit protein uS8c (132 aa).

This sequence belongs to the universal ribosomal protein uS8 family. As to quaternary structure, part of the 30S ribosomal subunit.

Its subcellular location is the plastid. It localises to the chloroplast. One of the primary rRNA binding proteins, it binds directly to 16S rRNA central domain where it helps coordinate assembly of the platform of the 30S subunit. The sequence is that of Small ribosomal subunit protein uS8c (rps8) from Huperzia lucidula (Shining clubmoss).